The primary structure comprises 853 residues: ATP-dependent zinc metalloprotease FtsH (853 aa).

The Cytoplasmic segment spans residues Met1–Lys5. Residues Tyr6–Phe26 traverse the membrane as a helical segment. Topologically, residues Ser27 to Ser113 are extracellular. Residues Phe114–Phe134 traverse the membrane as a helical segment. Over Phe135–Gly853 the chain is Cytoplasmic. Gly205–Thr212 serves as a coordination point for ATP. His427 contacts Zn(2+). The active site involves Glu428. The Zn(2+) site is built by His431 and Asp503. Composition is skewed to basic and acidic residues over residues Glu619–Val632 and Ala639–Lys648. Residues Glu619–Gly853 form a disordered region. Low complexity predominate over residues Pro677–Gly695. 2 stretches are compositionally biased toward polar residues: residues Thr728–Ser739 and Met770–Pro788. Residues Leu796–Val813 show a composition bias toward basic and acidic residues.

It in the central section; belongs to the AAA ATPase family. In the C-terminal section; belongs to the peptidase M41 family. Homohexamer. Zn(2+) is required as a cofactor.

It localises to the cell membrane. Functionally, acts as a processive, ATP-dependent zinc metallopeptidase for both cytoplasmic and membrane proteins. Plays a role in the quality control of integral membrane proteins. In Corynebacterium glutamicum (strain ATCC 13032 / DSM 20300 / JCM 1318 / BCRC 11384 / CCUG 27702 / LMG 3730 / NBRC 12168 / NCIMB 10025 / NRRL B-2784 / 534), this protein is ATP-dependent zinc metalloprotease FtsH.